We begin with the raw amino-acid sequence, 375 residues long: Succinyl-diaminopimelate desuccinylase (375 aa).

H66 contributes to the Zn(2+) binding site. D68 is a catalytic residue. Residue D99 participates in Zn(2+) binding. Residue E133 is the Proton acceptor of the active site. Zn(2+) is bound by residues E134, E162, and H348.

Belongs to the peptidase M20A family. DapE subfamily. Homodimer. Requires Zn(2+) as cofactor. Co(2+) is required as a cofactor.

It carries out the reaction N-succinyl-(2S,6S)-2,6-diaminopimelate + H2O = (2S,6S)-2,6-diaminopimelate + succinate. Its pathway is amino-acid biosynthesis; L-lysine biosynthesis via DAP pathway; LL-2,6-diaminopimelate from (S)-tetrahydrodipicolinate (succinylase route): step 3/3. In terms of biological role, catalyzes the hydrolysis of N-succinyl-L,L-diaminopimelic acid (SDAP), forming succinate and LL-2,6-diaminopimelate (DAP), an intermediate involved in the bacterial biosynthesis of lysine and meso-diaminopimelic acid, an essential component of bacterial cell walls. This is Succinyl-diaminopimelate desuccinylase from Aeromonas salmonicida (strain A449).